The sequence spans 208 residues: FMN-dependent NADH:quinone oxidoreductase 1 (208 aa).

Position 17-19 (17-19 (SVS)) interacts with FMN.

The protein belongs to the azoreductase type 1 family. Homodimer. The cofactor is FMN.

It catalyses the reaction 2 a quinone + NADH + H(+) = 2 a 1,4-benzosemiquinone + NAD(+). It carries out the reaction N,N-dimethyl-1,4-phenylenediamine + anthranilate + 2 NAD(+) = 2-(4-dimethylaminophenyl)diazenylbenzoate + 2 NADH + 2 H(+). Quinone reductase that provides resistance to thiol-specific stress caused by electrophilic quinones. Functionally, also exhibits azoreductase activity. Catalyzes the reductive cleavage of the azo bond in aromatic azo compounds to the corresponding amines. This is FMN-dependent NADH:quinone oxidoreductase 1 from Listeria innocua serovar 6a (strain ATCC BAA-680 / CLIP 11262).